The following is a 472-amino-acid chain: Coronin-6 (472 aa).

WD repeat units lie at residues Gly79–Asn119, Gly129–Ser169, Ile173–Glu212, Ala216–Ala259, and Asp264–His304. Residues Asn409–His434 are disordered. Residues Pro419 to Pro429 are compositionally biased toward low complexity. Residues Leu430–Asp469 are a coiled coil.

This chain is Coronin-6 (Coro6), found in Rattus norvegicus (Rat).